We begin with the raw amino-acid sequence, 62 residues long: Temporin-HN1 (62 aa).

Residues methionine 1–serine 22 form the signal peptide. Residues glutamate 23–glutamate 44 constitute a propeptide that is removed on maturation. Leucine 60 carries the leucine amide modification.

Expressed by the skin glands.

It is found in the secreted. Has antimicrobial activity against some Gram-positive bacteria and fungi but has no activity against a range of Gram-negative bacteria except P.faecalis. Active against the Gram-positive bacteria S.aureus ATCC 25923 (MIC=37.5 uM), S.carnosus KHS (MIC=37.5 uM), B.licheniformis X39 (MIC=19 uM), R.rhodochrous X15 (MIC=4.8 uM), is virtually inactive against E.faecalis 981 (MIC=150 uM) and inactive against E.faecium 091299. Has some antimicrobial activity against the Gram-negative bacterium P.faecalis X29 (MIC=75 uM) and is inactive against E.coli, P.aeruginosa and S.typhi. Has antifungal activity against C.albicans ATCC 2002 (MIC=19 uM) and lower activity against the slime mold 090223 (MIC=75 uM). Has low hemolytic activity against human erythrocytes (LC(50)=75 uM). The chain is Temporin-HN1 from Odorrana hainanensis (Odor frog).